A 217-amino-acid chain; its full sequence is Large ribosomal subunit protein uL3 (217 aa).

This sequence belongs to the universal ribosomal protein uL3 family. As to quaternary structure, part of the 50S ribosomal subunit. Forms a cluster with proteins L14 and L19.

Its function is as follows. One of the primary rRNA binding proteins, it binds directly near the 3'-end of the 23S rRNA, where it nucleates assembly of the 50S subunit. The protein is Large ribosomal subunit protein uL3 of Mycobacterium leprae (strain TN).